A 704-amino-acid polypeptide reads, in one-letter code: Plasma membrane ATPase 2 (704 aa).

A helical transmembrane segment spans residues 1-16 (CSIAVGMIIEIIVMYP). Residues 17-26 (IQHRKYRPGI) are Extracellular-facing. The chain crosses the membrane as a helical span at residues 27–48 (DNLLVLLIGGIPIAMPTVLSVT). The Cytoplasmic segment spans residues 49 to 395 (MAIGSHRLAQ…TSRAIFQRMK (347 aa)). Asp-81 (4-aspartylphosphate intermediate) is an active-site residue. Asp-340 and Asp-344 together coordinate Mg(2+). A helical membrane pass occupies residues 396–417 (NYTIYAVSITIRIVLGFMLLAL). Over 418–422 (IWKFD) the chain is Extracellular. A helical membrane pass occupies residues 423 to 445 (FPPFMVLIIAILNDGTIMTISKD). At 446-461 (RVKPSPLPDSWKLAEI) the chain is on the cytoplasmic side. A helical membrane pass occupies residues 462–482 (FTTGVVLGGYLAMMTVIFFWA). The Extracellular portion of the chain corresponds to 483–507 (AYETQFFPRVFGVSTLQRTATDDFR). Residues 508–528 (KLASAIYLQVSTISQALIFVT) form a helical membrane-spanning segment. Topologically, residues 529-540 (RSRSWSFVERPG) are cytoplasmic. The chain crosses the membrane as a helical span at residues 541-561 (LLLVVALIVAQLVATLIAVYA). Residues 562–570 (SWSFAAIEG) lie on the Extracellular side of the membrane. The chain crosses the membrane as a helical span at residues 571-591 (IGWGWAGVIWLYNLVFYFPLD). Topologically, residues 592–704 (IIKFLIRYAL…IETIQQSYTV (113 aa)) are cytoplasmic.

The protein belongs to the cation transport ATPase (P-type) (TC 3.A.3) family. Type IIIA subfamily. Possibly exists as a homodimer or a homotrimer.

It localises to the cell membrane. The catalysed reaction is ATP + H2O + H(+)(in) = ADP + phosphate + 2 H(+)(out). In terms of biological role, the plasma membrane ATPase of plants and fungi is a hydrogen ion pump. The proton gradient it generates drives the active transport of nutrients by H(+)-symport. The resulting external acidification and/or internal alkinization may mediate growth responses. The protein is Plasma membrane ATPase 2 (LHA2) of Solanum lycopersicum (Tomato).